The primary structure comprises 140 residues: Ribosome-binding factor A (140 aa).

Residues 121–140 form a disordered region; it reads KTEQTSADDDADRLDSEDRS.

Belongs to the RbfA family. As to quaternary structure, monomer. Binds 30S ribosomal subunits, but not 50S ribosomal subunits or 70S ribosomes.

The protein resides in the cytoplasm. Its function is as follows. One of several proteins that assist in the late maturation steps of the functional core of the 30S ribosomal subunit. Associates with free 30S ribosomal subunits (but not with 30S subunits that are part of 70S ribosomes or polysomes). Required for efficient processing of 16S rRNA. May interact with the 5'-terminal helix region of 16S rRNA. The polypeptide is Ribosome-binding factor A (Psychrobacter sp. (strain PRwf-1)).